A 439-amino-acid polypeptide reads, in one-letter code: Glutamine synthetase (439 aa).

The GS beta-grasp domain maps to 12–93 (SKIKFVQLVF…VYGFIYKDNK (82 aa)). The GS catalytic domain occupies 99 to 439 (PRGILKRALE…EWELERYFFL (341 aa)). Mg(2+) contacts are provided by Glu-122 and Glu-124. ATP is bound at residue Glu-172. Mg(2+)-binding residues include Glu-177 and Glu-184. An L-glutamate-binding site is contributed by Gly-229. His-233 contacts Mg(2+). ATP is bound by residues 235 to 237 (HIS) and Ser-237. 3 residues coordinate L-glutamate: Arg-283, Glu-289, and Arg-301. Arg-301, Arg-306, and Lys-313 together coordinate ATP. Glu-318 contributes to the Mg(2+) binding site. Arg-320 lines the L-glutamate pocket.

Belongs to the glutamine synthetase family. In terms of assembly, oligomer of 12 subunits arranged in the form of two hexagons. The cofactor is Mg(2+).

It localises to the cytoplasm. It catalyses the reaction L-glutamate + NH4(+) + ATP = L-glutamine + ADP + phosphate + H(+). Functionally, probably involved in nitrogen metabolism via ammonium assimilation. Catalyzes the ATP-dependent biosynthesis of glutamine from glutamate and ammonia. The chain is Glutamine synthetase from Pyrococcus woesei.